A 467-amino-acid polypeptide reads, in one-letter code: 3-isopropylmalate dehydratase large subunit (467 aa).

The [4Fe-4S] cluster site is built by Cys347, Cys407, and Cys410.

It belongs to the aconitase/IPM isomerase family. LeuC type 1 subfamily. As to quaternary structure, heterodimer of LeuC and LeuD. Requires [4Fe-4S] cluster as cofactor.

It catalyses the reaction (2R,3S)-3-isopropylmalate = (2S)-2-isopropylmalate. The protein operates within amino-acid biosynthesis; L-leucine biosynthesis; L-leucine from 3-methyl-2-oxobutanoate: step 2/4. In terms of biological role, catalyzes the isomerization between 2-isopropylmalate and 3-isopropylmalate, via the formation of 2-isopropylmaleate. This chain is 3-isopropylmalate dehydratase large subunit, found in Synechococcus sp. (strain JA-2-3B'a(2-13)) (Cyanobacteria bacterium Yellowstone B-Prime).